We begin with the raw amino-acid sequence, 240 residues long: uncharacterized protein (240 aa).

Residues 197–210 (PLKSHSASRLNHLT) show a composition bias toward polar residues. The disordered stretch occupies residues 197–222 (PLKSHSASRLNHLTPSPRPGETPLEN).

This is an uncharacterized protein from Caenorhabditis elegans.